The chain runs to 293 residues: uncharacterized protein (293 aa).

2 disordered regions span residues 1 to 95 (MFLR…KDKA) and 268 to 293 (EETADWESEGQGKEAKEQTEGPGRAL). Residues serine 34, serine 35, and serine 89 each carry the phosphoserine modification. Composition is skewed to basic and acidic residues over residues 85–95 (KRMDSLKKDKA) and 277–286 (GQGKEAKEQT).

This is an uncharacterized protein from Rattus norvegicus (Rat).